The sequence spans 314 residues: Replication initiation protein (314 aa).

This sequence belongs to the plasmid replication initiation factor family.

Its function is as follows. This protein is probably a specific topoisomerase involved in initiating replication. This protein is specifically required and may be rate-limiting for replication of the plasmid in vivo. This chain is Replication initiation protein (repC), found in Staphylococcus aureus.